The chain runs to 695 residues: Elongation factor G (695 aa).

Residues 8–282 (EKTRNIGIMA…AVLDYLPAPT (275 aa)) form the tr-type G domain. GTP-binding positions include 17-24 (AHIDAGKT), 81-85 (DTPGH), and 135-138 (NKMD).

It belongs to the TRAFAC class translation factor GTPase superfamily. Classic translation factor GTPase family. EF-G/EF-2 subfamily.

It is found in the cytoplasm. Functionally, catalyzes the GTP-dependent ribosomal translocation step during translation elongation. During this step, the ribosome changes from the pre-translocational (PRE) to the post-translocational (POST) state as the newly formed A-site-bound peptidyl-tRNA and P-site-bound deacylated tRNA move to the P and E sites, respectively. Catalyzes the coordinated movement of the two tRNA molecules, the mRNA and conformational changes in the ribosome. In Listeria monocytogenes serotype 4b (strain CLIP80459), this protein is Elongation factor G.